Here is a 75-residue protein sequence, read N- to C-terminus: Sec-independent protein translocase protein TatA (75 aa).

The helical transmembrane segment at 1 to 21 (MGSFSIWHWLIVLVIVLLVFG) threads the bilayer. Residues 41 to 75 (KGMHDDDKPAGKLGDDSRSAEQAREAQAERDRDAR) are disordered.

This sequence belongs to the TatA/E family. In terms of assembly, the Tat system comprises two distinct complexes: a TatABC complex, containing multiple copies of TatA, TatB and TatC subunits, and a separate TatA complex, containing only TatA subunits. Substrates initially bind to the TatABC complex, which probably triggers association of the separate TatA complex to form the active translocon.

The protein resides in the cell inner membrane. Part of the twin-arginine translocation (Tat) system that transports large folded proteins containing a characteristic twin-arginine motif in their signal peptide across membranes. TatA could form the protein-conducting channel of the Tat system. The protein is Sec-independent protein translocase protein TatA of Xanthomonas campestris pv. campestris (strain 8004).